Consider the following 331-residue polypeptide: 6-phosphogluconolactonase (331 aa).

Residue K287 is modified to N6-acetyllysine.

Belongs to the cycloisomerase 2 family.

It catalyses the reaction 6-phospho-D-glucono-1,5-lactone + H2O = 6-phospho-D-gluconate + H(+). Its pathway is carbohydrate degradation; pentose phosphate pathway; D-ribulose 5-phosphate from D-glucose 6-phosphate (oxidative stage): step 2/3. In terms of biological role, catalyzes the hydrolysis of 6-phosphogluconolactone to 6-phosphogluconate. The sequence is that of 6-phosphogluconolactonase from Escherichia coli O157:H7.